Reading from the N-terminus, the 323-residue chain is tRNA dimethylallyltransferase (323 aa).

Glycine 12–threonine 19 serves as a coordination point for ATP. Threonine 14 to threonine 19 is a binding site for substrate. Interaction with substrate tRNA stretches follow at residues aspartate 37 to leucine 40 and glutamine 161 to arginine 165.

Belongs to the IPP transferase family. Monomer. Requires Mg(2+) as cofactor.

The catalysed reaction is adenosine(37) in tRNA + dimethylallyl diphosphate = N(6)-dimethylallyladenosine(37) in tRNA + diphosphate. Functionally, catalyzes the transfer of a dimethylallyl group onto the adenine at position 37 in tRNAs that read codons beginning with uridine, leading to the formation of N6-(dimethylallyl)adenosine (i(6)A). The protein is tRNA dimethylallyltransferase of Pseudomonas putida (strain ATCC 700007 / DSM 6899 / JCM 31910 / BCRC 17059 / LMG 24140 / F1).